A 103-amino-acid chain; its full sequence is Small ribosomal subunit protein uS10 (103 aa).

This sequence belongs to the universal ribosomal protein uS10 family. As to quaternary structure, part of the 30S ribosomal subunit.

Its function is as follows. Involved in the binding of tRNA to the ribosomes. The polypeptide is Small ribosomal subunit protein uS10 (Tolumonas auensis (strain DSM 9187 / NBRC 110442 / TA 4)).